Reading from the N-terminus, the 200-residue chain is Phospholipase A2 inhibitor CNF (200 aa).

The first 19 residues, 1–19 (MKYLHTICLLFIFVARGNS), serve as a signal peptide directing secretion. 8 disulfides stabilise this stretch: C22–C46, C25–C32, C39–C67, C73–C94, C95–C100, C118–C143, C136–C165, and C169–C191. The N-linked (GlcNAc...) asparagine; partial glycan is linked to N176.

As to quaternary structure, occurs as a mixture of oligomers. Tetrameric arrangement appears to be the predominant quaternary structure. Interacts with phospholipase A2 crotoxin basic subunit CBd; the interaction leads to dissociation of the CA-CB heterodimer and to inhibition of PLA2 activity of the CB subunit. In terms of processing, the carbohydrate moiety increases the inhibition capacity of CNF, but is not essential for activity and for oligomerization. As to expression, expressed by the liver.

It is found in the secreted. Inhibits the PLA2 activity of crotoxin (CTX) by replacing the acid subunit (CA) in the CTX complex. Displays a pro-inflammatory action through activation of important main signaling pathways for human leukocytes, in vitro. Abolishes both the muscle-paralyzing and muscle-damaging activities of CTX in mice phrenic nerve-diaphragm muscle preparations. The protein is Phospholipase A2 inhibitor CNF of Crotalus durissus terrificus (South American rattlesnake).